A 129-amino-acid chain; its full sequence is uncharacterized protein (129 aa).

The segment covering 86-96 has biased composition (acidic residues); sequence NDGFSSDDEPE. The tract at residues 86–116 is disordered; the sequence is NDGFSSDDEPEEHVILTEDNQGEPSETPQAT. A compositionally biased stretch (polar residues) spans 103 to 116; the sequence is EDNQGEPSETPQAT.

The protein belongs to the asfivirus D129L family.

This is an uncharacterized protein from African swine fever virus (strain Badajoz 1971 Vero-adapted) (Ba71V).